Reading from the N-terminus, the 319-residue chain is Thioredoxin reductase (319 aa).

FAD-binding positions include 11-14, 40-41, glutamine 45, asparagine 54, valine 87, cysteine 145, aspartate 288, and 295-297; these read SGPA, IA, and RQA. Cysteine 142 and cysteine 145 are joined by a disulfide.

It belongs to the class-II pyridine nucleotide-disulfide oxidoreductase family. In terms of assembly, homodimer. The cofactor is FAD.

It localises to the cytoplasm. The enzyme catalyses [thioredoxin]-dithiol + NADP(+) = [thioredoxin]-disulfide + NADPH + H(+). The polypeptide is Thioredoxin reductase (TRR1) (Yarrowia lipolytica (strain CLIB 122 / E 150) (Yeast)).